A 398-amino-acid polypeptide reads, in one-letter code: S-adenosylmethionine synthase (398 aa).

H17 is a binding site for ATP. D19 contacts Mg(2+). E45 contributes to the K(+) binding site. E58 and Q101 together coordinate L-methionine. The segment at 101-111 (QSPDIAQGVDK) is flexible loop. Residues 176-178 (DGK), 243-244 (RF), D252, 258-259 (RK), and K279 contribute to the ATP site. Residue D252 participates in L-methionine binding. K283 serves as a coordination point for L-methionine.

Belongs to the AdoMet synthase family. Homotetramer; dimer of dimers. Mg(2+) is required as a cofactor. Requires K(+) as cofactor.

It is found in the cytoplasm. The enzyme catalyses L-methionine + ATP + H2O = S-adenosyl-L-methionine + phosphate + diphosphate. It functions in the pathway amino-acid biosynthesis; S-adenosyl-L-methionine biosynthesis; S-adenosyl-L-methionine from L-methionine: step 1/1. Its function is as follows. Catalyzes the formation of S-adenosylmethionine (AdoMet) from methionine and ATP. The overall synthetic reaction is composed of two sequential steps, AdoMet formation and the subsequent tripolyphosphate hydrolysis which occurs prior to release of AdoMet from the enzyme. The sequence is that of S-adenosylmethionine synthase from Staphylococcus haemolyticus (strain JCSC1435).